The sequence spans 61 residues: Small ribosomal subunit protein uS14 (61 aa).

Zn(2+)-binding residues include cysteine 24, cysteine 27, cysteine 40, and cysteine 43.

It belongs to the universal ribosomal protein uS14 family. Zinc-binding uS14 subfamily. Part of the 30S ribosomal subunit. Contacts proteins S3 and S10. Zn(2+) serves as cofactor.

Its function is as follows. Binds 16S rRNA, required for the assembly of 30S particles and may also be responsible for determining the conformation of the 16S rRNA at the A site. This Endomicrobium trichonymphae protein is Small ribosomal subunit protein uS14.